A 444-amino-acid chain; its full sequence is Tubulin beta-4 chain (444 aa).

GTP-binding residues include glutamine 11, glutamate 69, serine 138, glycine 142, threonine 143, glycine 144, asparagine 204, and asparagine 226. Residue glutamate 69 coordinates Mg(2+).

This sequence belongs to the tubulin family. Dimer of alpha and beta chains. A typical microtubule is a hollow water-filled tube with an outer diameter of 25 nm and an inner diameter of 15 nM. Alpha-beta heterodimers associate head-to-tail to form protofilaments running lengthwise along the microtubule wall with the beta-tubulin subunit facing the microtubule plus end conferring a structural polarity. Microtubules usually have 13 protofilaments but different protofilament numbers can be found in some organisms and specialized cells. The cofactor is Mg(2+).

It localises to the cytoplasm. It is found in the cytoskeleton. Functionally, tubulin is the major constituent of microtubules, a cylinder consisting of laterally associated linear protofilaments composed of alpha- and beta-tubulin heterodimers. Microtubules grow by the addition of GTP-tubulin dimers to the microtubule end, where a stabilizing cap forms. Below the cap, tubulin dimers are in GDP-bound state, owing to GTPase activity of alpha-tubulin. The sequence is that of Tubulin beta-4 chain (TUBB4) from Arabidopsis thaliana (Mouse-ear cress).